Reading from the N-terminus, the 334-residue chain is Stabilizer of axonemal microtubules 3 (334 aa).

3 disordered regions span residues 81–105, 128–153, and 233–260; these read AYVP…PTRT, YQSS…YFGP, and QVWS…RVPR. Over residues 128 to 141 the composition is skewed to polar residues; it reads YQSSETRAQYTGSP. Positions 240-251 are enriched in pro residues; sequence QRPPCPRSSRPP.

In Homo sapiens (Human), this protein is Stabilizer of axonemal microtubules 3.